We begin with the raw amino-acid sequence, 216 residues long: IQNDTGLPEESICSFRFLWRSTSVDDAVQIHWANGNIQVIRPVRGISINGEAQGGIRPPYWVILAFCRSADGRIICSEGYAHALYQLTCPVPVDSKLERNTLTALLNVASWLKRKPGTPELSLERPLFDTEVYVNGEKKYVLPDFIVTARAPDGKTARVVIETMGYEDSDYCARKSRQHTGMKQIGELHTDPPKWLDNDHPPFKKHMYGVFMHLRY.

The protein belongs to the channel forming colicin family.

This is an uncharacterized protein from Escherichia coli.